The chain runs to 130 residues: Large-conductance mechanosensitive channel (130 aa).

Transmembrane regions (helical) follow at residues I14–F34 and F73–F93.

The protein belongs to the MscL family. As to quaternary structure, homopentamer.

Its subcellular location is the cell membrane. Functionally, channel that opens in response to stretch forces in the membrane lipid bilayer. May participate in the regulation of osmotic pressure changes within the cell. The polypeptide is Large-conductance mechanosensitive channel (Oceanobacillus iheyensis (strain DSM 14371 / CIP 107618 / JCM 11309 / KCTC 3954 / HTE831)).